An 82-amino-acid chain; its full sequence is Large ribosomal subunit protein bL27c (82 aa).

The segment at 1 to 22 (MAHKKGAGSTKNGRDSNSKRLG) is disordered.

This sequence belongs to the bacterial ribosomal protein bL27 family.

It localises to the plastid. The protein localises to the chloroplast. The sequence is that of Large ribosomal subunit protein bL27c (rpl27) from Chrysotila carterae (Marine alga).